The primary structure comprises 137 residues: 14 kDa proline-rich protein DC2.15 (137 aa).

Positions 1–25 are cleaved as a signal peptide; that stretch reads MGSKNSASVALFFTLNILFFALVSS. The interval 30–53 is disordered; sequence PDPYKPKPKPTPKPTPTPYPSAGK. Residues 38 to 48 are compositionally biased toward pro residues; sequence KPTPKPTPTPY. Residues 88-104 form a helical membrane-spanning segment; that stretch reads LEGLVNLEAAVCLCTAI.

The protein resides in the membrane. In terms of biological role, may be connected with the initiation of embryogenesis or with the metabolic changes produced by the removal of auxins. This Daucus carota (Wild carrot) protein is 14 kDa proline-rich protein DC2.15.